The primary structure comprises 280 residues: Putative S-adenosyl-L-methionine-dependent methyltransferase FRAAL3836 (280 aa).

S-adenosyl-L-methionine contacts are provided by residues Asp-121 and 150 to 151 (DL).

This sequence belongs to the UPF0677 family.

In terms of biological role, exhibits S-adenosyl-L-methionine-dependent methyltransferase activity. The sequence is that of Putative S-adenosyl-L-methionine-dependent methyltransferase FRAAL3836 from Frankia alni (strain DSM 45986 / CECT 9034 / ACN14a).